Reading from the N-terminus, the 197-residue chain is Recombination protein RecR (197 aa).

A C4-type zinc finger spans residues Cys-57–Cys-72. The Toprim domain occupies Gly-79–Pro-174.

The protein belongs to the RecR family.

May play a role in DNA repair. It seems to be involved in an RecBC-independent recombinational process of DNA repair. It may act with RecF and RecO. The protein is Recombination protein RecR of Pelobacter propionicus (strain DSM 2379 / NBRC 103807 / OttBd1).